The sequence spans 556 residues: Potassium-transporting ATPase potassium-binding subunit (556 aa).

Helical transmembrane passes span 6–26 (AGLI…VPLG), 65–85 (GVLA…LVQG), 133–153 (GLAV…VALV), 176–196 (LRIL…GGAI), 249–269 (PTAW…FSLP), 283–303 (YAIA…MLWF), 378–398 (GLYG…LMVG), 419–439 (YFLV…ALPG), 483–503 (ALGL…LALA), and 526–546 (FVGM…LPML).

It belongs to the KdpA family. The system is composed of three essential subunits: KdpA, KdpB and KdpC.

Its subcellular location is the cell membrane. Its function is as follows. Part of the high-affinity ATP-driven potassium transport (or Kdp) system, which catalyzes the hydrolysis of ATP coupled with the electrogenic transport of potassium into the cytoplasm. This subunit binds the extracellular potassium ions and delivers the ions to the membrane domain of KdpB through an intramembrane tunnel. This is Potassium-transporting ATPase potassium-binding subunit from Mycobacterium avium (strain 104).